Here is a 174-residue protein sequence, read N- to C-terminus: Protein RESTRICTED TEV MOVEMENT 1 (174 aa).

The 152-residue stretch at 1 to 152 (MKIGPVGKHD…LQYIGVYLRP (152 aa)) folds into the Jacalin-type lectin domain.

The protein belongs to the jacalin lectin family. In terms of assembly, self-interacts. Interacts with RTM3. In terms of tissue distribution, expressed at low levels exclusively in phloem-associated cells (e.g. sieve elements and adjacent cells).

Its subcellular location is the cytoplasm. Its function is as follows. Required for the restriction of long-distance movement of the pathogenic tobacco etch virus (TEV) without causing a hypersensitive response or inducing systemic acquired resistance. This Arabidopsis thaliana (Mouse-ear cress) protein is Protein RESTRICTED TEV MOVEMENT 1 (RTM1).